We begin with the raw amino-acid sequence, 479 residues long: Beta-monoglucosyldiacylglycerol synthase (479 aa).

Helical transmembrane passes span 48 to 68, 363 to 383, 389 to 409, and 428 to 448; these read AAVM…WVWG, FLLM…MALW, LLTP…YYGL, and LART…MPAV.

It belongs to the glycosyltransferase 2 family. Requires Mg(2+) as cofactor.

It localises to the membrane. The catalysed reaction is a 1,2-diacyl-sn-glycerol + UDP-alpha-D-glucose = a 1,2-diacyl-3-O-(beta-D-glucopyranosyl)-sn-glycerol + UDP + H(+). Functionally, glucosyltransferase involved in the biosynthesis of the non-bilayer-forming membrane lipid beta-monoglucosyldiacylglycerol which contributes to regulate the properties and stability of the membrane. Catalyzes the transfer of a glucosyl residue from UDP-Glc to diacylglycerol (DAG) acceptor to form the corresponding beta-glucosyl-DAG (1,2-diacyl-3-O-(beta-D-glucopyranosyl)-sn-glycerol). It can only use UDP-Glc as sugar donor. Two types of DAG (dipalmitoyl-DAG (DPDAG) and 1-oleoyl-2-palmitoyl-DAG (OPDAG)) can be used as sugar acceptors, but OPDAG is preferred. The sequence is that of Beta-monoglucosyldiacylglycerol synthase from Synechocystis sp. (strain ATCC 27184 / PCC 6803 / Kazusa).